A 1460-amino-acid polypeptide reads, in one-letter code: Venom prothrombin activator omicarin-C non-catalytic subunit (1460 aa).

The N-terminal stretch at 1–30 (MGRYSVSPVPKCLLLMFLGWSGLKYYQVNA) is a signal peptide. Plastocyanin-like domains lie at 32 to 196 (QLRE…LLIC), 206 to 330 (AQKF…LNIK), 351 to 529 (MNWE…LLVC), and 539 to 685 (VQNK…FLDA). F5/8 type A domains lie at 32 to 330 (QLRE…LNIK) and 350 to 685 (IMNW…FLDA). Positions 124, 139, 142, and 143 each coordinate Ca(2+). An N-linked (GlcNAc...) asparagine glycan is attached at N156. Cysteines 170 and 196 form a disulfide. N242, N300, N385, N406, and N471 each carry an N-linked (GlcNAc...) asparagine glycan. The cysteines at positions 251 and 332 are disulfide-linked. An intrachain disulfide couples C503 to C529. A glycan (N-linked (GlcNAc...) asparagine) is linked at N557. 4 cysteine pairs are disulfide-bonded: C672–C1031, C965–C991, C1147–C1298, and C1303–C1457. Residues 693–817 (GNEEEEEDDG…SDDIAGRYLR (125 aa)) form a b region. The disordered stretch occupies residues 740–760 (LLDDEDNPEQSRSEQTEDDEE). A propeptide spans 772-817 (SFKGSVAEEELKHTALALEEDAHASDPRIDSNSARNSDDIAGRYLR) (activation peptide (connecting region)). 2 Plastocyanin-like domains span residues 823-991 (NKRR…ILIC) and 1000-1143 (NRTI…FTVI). Residues 823–1143 (NKRRYYIAAE…RGMQALFTVI (321 aa)) enclose the F5/8 type A 3 domain. Positions 919, 934, 937, and 938 each coordinate Ca(2+). N-linked (GlcNAc...) asparagine glycosylation occurs at N943. N-linked (GlcNAc...) asparagine glycans are attached at residues N1000, N1180, and N1397. 2 consecutive F5/8 type C domains span residues 1147-1298 (CKLP…LLGC) and 1303-1457 (CSVP…LFGC).

Belongs to the multicopper oxidase family. As to quaternary structure, heterodimer of a light and a heavy chains; non-disulfide-linked. The interaction between the two chains is calcium-dependent. Found in its active form associated with omicarin-C catalytic subunit (AC Q58L95). In terms of processing, in physiological conditions, blood coagulation factor V and factor Va are inactivated by activated protein C (APC) through proteolytic degradation of the heavy chain. However, omicarin-C non-catalytic subunit (factor V-like protein) retains its full activity even at high concentration of APC. This has two explanations: this protein has only one of the three cleavage sites present in factor V that are targeted by the APC for inactivation, and the binding with the catalytic subunit protect the cleavage site from inactivation. As to expression, expressed by the venom gland.

It localises to the secreted. Functionally, snake prothrombin activator that attacks the hemostatic system of prey. This non-catalytic subunit is functionally similar to blood coagulation factor V. It serves as a critical cofactor for the prothrombinase activity of the catalytic subunit, which is similar to the blood coagulation factor X. The complex converts prothrombin to thrombin by sequential cleavage at two positions, Arg-320 followed by Arg-271. Cleavage at Arg-320 produces an active intermediate known as meizothrombin. Meizothrombin is the 'second' substrate for prothrombinase, and it docks in an altered manner to present the second cleavage site (271). Cleavage at Arg-271 releases active thrombin from its pro-fragment. This order of events is reversed if the protease component of prothrombinase is used on its own, suggesting that the 271 site is inherently more accessible to proteolysis. In Oxyuranus microlepidotus (Inland taipan), this protein is Venom prothrombin activator omicarin-C non-catalytic subunit.